The sequence spans 409 residues: Serine/threonine transporter SstT (409 aa).

9 consecutive transmembrane segments (helical) span residues 17 to 37 (LVGQ…FFPA), 49 to 69 (FVSA…MASI), 83 to 103 (ILLL…IASF), 142 to 162 (ALIS…GIAF), 180 to 200 (VSLI…GLVA), 218 to 238 (LVVL…LIVF), 301 to 321 (GAAI…GIAV), 331 to 351 (VVAS…LLLI), and 357 to 377 (LFGI…IIAI).

Belongs to the dicarboxylate/amino acid:cation symporter (DAACS) (TC 2.A.23) family.

The protein localises to the cell inner membrane. The catalysed reaction is L-serine(in) + Na(+)(in) = L-serine(out) + Na(+)(out). The enzyme catalyses L-threonine(in) + Na(+)(in) = L-threonine(out) + Na(+)(out). Involved in the import of serine and threonine into the cell, with the concomitant import of sodium (symport system). The chain is Serine/threonine transporter SstT from Pseudomonas aeruginosa (strain UCBPP-PA14).